A 545-amino-acid polypeptide reads, in one-letter code: Phenylalanine--tRNA ligase beta subunit (545 aa).

A B5 domain is found at 270 to 346 (LEPKERLLTT…KGYGYENIKV (77 aa)). Positions 324, 330, 333, and 334 each coordinate Mg(2+).

Belongs to the phenylalanyl-tRNA synthetase beta subunit family. Type 2 subfamily. As to quaternary structure, tetramer of two alpha and two beta subunits. Mg(2+) is required as a cofactor.

Its subcellular location is the cytoplasm. The catalysed reaction is tRNA(Phe) + L-phenylalanine + ATP = L-phenylalanyl-tRNA(Phe) + AMP + diphosphate + H(+). This Methanosarcina acetivorans (strain ATCC 35395 / DSM 2834 / JCM 12185 / C2A) protein is Phenylalanine--tRNA ligase beta subunit.